The chain runs to 478 residues: Kynurenine 3-monooxygenase (478 aa).

FAD is bound by residues valine 19, 37–40 (YEAR), and alanine 57. Arginine 85 and tyrosine 99 together coordinate L-kynurenine. Residues arginine 111, leucine 136, threonine 172, aspartate 304, and 317 to 318 (MN) each bind FAD. Positions 363 and 398 each coordinate L-kynurenine. A run of 2 helical transmembrane segments spans residues 385 to 404 (FLHA…VAFT) and 425 to 445 (GLFV…VHHL).

Belongs to the aromatic-ring hydroxylase family. KMO subfamily. The cofactor is FAD. In terms of tissue distribution, highest activity in liver and kidney. Low activity in spleen, stomach, intestinal tract, esophagus, heart and lung.

The protein resides in the mitochondrion outer membrane. The enzyme catalyses L-kynurenine + NADPH + O2 + H(+) = 3-hydroxy-L-kynurenine + NADP(+) + H2O. Its pathway is cofactor biosynthesis; NAD(+) biosynthesis; quinolinate from L-kynurenine: step 1/3. Functionally, catalyzes the hydroxylation of L-kynurenine (L-Kyn) to form 3-hydroxy-L-kynurenine (L-3OHKyn). Required for synthesis of quinolinic acid, a neurotoxic NMDA receptor antagonist and potential endogenous inhibitor of NMDA receptor signaling in axonal targeting, synaptogenesis and apoptosis during brain development. Quinolinic acid may also affect NMDA receptor signaling in pancreatic beta cells, osteoblasts, myocardial cells, and the gastrointestinal tract. In Rattus norvegicus (Rat), this protein is Kynurenine 3-monooxygenase.